A 227-amino-acid polypeptide reads, in one-letter code: DNA repair protein RecO (227 aa).

This sequence belongs to the RecO family.

In terms of biological role, involved in DNA repair and RecF pathway recombination. The polypeptide is DNA repair protein RecO (Pseudomonas putida (strain ATCC 47054 / DSM 6125 / CFBP 8728 / NCIMB 11950 / KT2440)).